The following is a 240-amino-acid chain: Purine nucleoside phosphorylase RC0672 (240 aa).

Zn(2+) contacts are provided by His60, Cys96, and His113.

This sequence belongs to the purine nucleoside phosphorylase YfiH/LACC1 family. As to quaternary structure, homodimer. Cu(2+) serves as cofactor. It depends on Zn(2+) as a cofactor.

It catalyses the reaction adenosine + phosphate = alpha-D-ribose 1-phosphate + adenine. The enzyme catalyses S-methyl-5'-thioadenosine + phosphate = 5-(methylsulfanyl)-alpha-D-ribose 1-phosphate + adenine. It carries out the reaction inosine + phosphate = alpha-D-ribose 1-phosphate + hypoxanthine. The catalysed reaction is adenosine + H2O + H(+) = inosine + NH4(+). Functionally, purine nucleoside enzyme that catalyzes the phosphorolysis of adenosine and inosine nucleosides, yielding D-ribose 1-phosphate and the respective free bases, adenine and hypoxanthine. Also catalyzes the phosphorolysis of S-methyl-5'-thioadenosine into adenine and S-methyl-5-thio-alpha-D-ribose 1-phosphate. Also has adenosine deaminase activity. This chain is Purine nucleoside phosphorylase RC0672, found in Rickettsia conorii (strain ATCC VR-613 / Malish 7).